The following is a 271-amino-acid chain: MWELRSIAFSRAVFAEFLATLLFVFFGLGSALNWPQALPSVLQIAMAFGLGIGTLVQALGHISGAHINPAVTVACLVGCHVSVLRAAFYVAAQLLGAVAGAALLHEITPADIRGDLAVNALSNSTTAGQAVTVELFLTLQLVLCIFASTDERRGENPGTPALSIGFSVALGHLLGIHYTGCSMNPARSLAPAVVTGKFDDHWVFWIGPLVGAILGSLLYNYVLFPPAKSLSERLAVLKGLEPDTDWEEREVRRRQSVELHSPQSLPRGTKA.

Residues 1-11 are Cytoplasmic-facing; it reads MWELRSIAFSR. The chain crosses the membrane as a helical span at residues 12 to 32; that stretch reads AVFAEFLATLLFVFFGLGSAL. At 33–40 the chain is on the extracellular side; that stretch reads NWPQALPS. The helical transmembrane segment at 41–59 threads the bilayer; that stretch reads VLQIAMAFGLGIGTLVQAL. Residues 60-64 lie on the Cytoplasmic side of the membrane; the sequence is GHISG. Residues 65 to 74 constitute an intramembrane region (discontinuously helical); it reads AHINPAVTVA. Positions 68–70 match the NPA 1 motif; it reads NPA. The Cytoplasmic segment spans residues 75 to 85; that stretch reads CLVGCHVSVLR. A helical membrane pass occupies residues 86–107; the sequence is AAFYVAAQLLGAVAGAALLHEI. Over 108–127 the chain is Extracellular; the sequence is TPADIRGDLAVNALSNSTTA. Residue Asn-123 is glycosylated (N-linked (GlcNAc...) asparagine). A helical transmembrane segment spans residues 128–148; sequence GQAVTVELFLTLQLVLCIFAS. Residues 149 to 156 lie on the Cytoplasmic side of the membrane; it reads TDERRGEN. The helical transmembrane segment at 157–176 threads the bilayer; the sequence is PGTPALSIGFSVALGHLLGI. Over 177 to 180 the chain is Extracellular; the sequence is HYTG. Positions 181–193 form an intramembrane region, discontinuously helical; it reads CSMNPARSLAPAV. Residues 184–186 carry the NPA 2 motif; that stretch reads NPA. Residues 194–201 are Extracellular-facing; sequence VTGKFDDH. Residues 202–222 traverse the membrane as a helical segment; that stretch reads WVFWIGPLVGAILGSLLYNYV. At 223–271 the chain is on the cytoplasmic side; the sequence is LFPPAKSLSERLAVLKGLEPDTDWEEREVRRRQSVELHSPQSLPRGTKA. Positions 248-271 are disordered; it reads EREVRRRQSVELHSPQSLPRGTKA. Residue Ser-256 is modified to Phosphoserine; by PKA. Residues 261–271 are compositionally biased toward polar residues; the sequence is SPQSLPRGTKA.

The protein belongs to the MIP/aquaporin (TC 1.A.8) family. Homotetramer. Interacts with micropeptide MIAC; the interaction leads to a reduction of filamentous actin fibers and inhibition of the EREG/EGFR signaling pathway. In terms of processing, ser-256 phosphorylation is necessary and sufficient for expression at the apical membrane. Endocytosis is not phosphorylation-dependent. N-glycosylated. Expressed in collecting tubules in kidney medulla (at protein level). Detected in kidney.

The protein resides in the apical cell membrane. The protein localises to the basolateral cell membrane. It localises to the cell membrane. It is found in the cytoplasmic vesicle membrane. Its subcellular location is the golgi apparatus. The protein resides in the trans-Golgi network membrane. The enzyme catalyses H2O(in) = H2O(out). The catalysed reaction is glycerol(in) = glycerol(out). Functionally, forms a water-specific channel that provides the plasma membranes of renal collecting duct with high permeability to water, thereby permitting water to move in the direction of an osmotic gradient. Plays an essential role in renal water homeostasis. Could also be permeable to glycerol. This is Aquaporin-2 from Homo sapiens (Human).